A 115-amino-acid chain; its full sequence is uncharacterized protein (115 aa).

This is an uncharacterized protein from Acidianus sp. F28 (AFV-2).